We begin with the raw amino-acid sequence, 716 residues long: MAPSLDSISHSFANGVASAKQAVNGASTNLAVAGSHLPTTQVTQVDIVEKMLAAPTDSTLELDGYSLNLGDVVSAARKGRPVRVKDSDEIRSKIDKSVEFLRSQLSMSVYGVTTGFGGSADTRTEDAISLQKALLEHQLCGVLPSSFDSFRLGRGLENSLPLEVVRGAMTIRVNSLTRGHSAVRLVVLEALTNFLNHGITPIVPLRGTISASGDLSPLSYIAAAISGHPDSKVHVVHEGKEKILYAREAMALFNLEPVVLGPKEGLGLVNGTAVSASMATLALHDAHMLSLLSQSLTAMTVEAMVGHAGSFHPFLHDVTRPHPTQIEVAGNIRKLLEGSRFAVHHEEEVKVKDDEGILRQDRYPLRTSPQWLGPLVSDLIHAHAVLTIEAGQSTTDNPLIDVENKTSHHGGNFQAAAVANTMEKTRLGLAQIGKLNFTQLTEMLNAGMNRGLPSCLAAEDPSLSYHCKGLDIAAAAYTSELGHLANPVTTHVQPAEMANQAVNSLALISARRTTESNDVLSLLLATHLYCVLQAIDLRAIEFEFKKQFGPAIVSLIDQHFGSAMTGSNLRDELVEKVNKTLAKRLEQTNSYDLVPRWHDAFSFAAGTVVEVLSSTSLSLAAVNAWKVAAAESAISLTRQVRETFWSAASTSSPALSYLSPRTQILYAFVREELGVKARRGDVFLGKQEVTIGSNVSKIYEAIKSGRINNVLLKMLA.

The active-site Proton donor/acceptor is Y110. Positions 211 to 213 form a cross-link, 5-imidazolinone (Ala-Gly); that stretch reads ASG. S212 is modified (2,3-didehydroalanine (Ser)). The (E)-cinnamate site is built by N270, Q360, R366, N397, K468, E496, and N499.

This sequence belongs to the PAL/histidase family. As to quaternary structure, homotetramer. Dimer of dimers. Contains an active site 4-methylidene-imidazol-5-one (MIO), which is formed autocatalytically by cyclization and dehydration of residues Ala-Ser-Gly.

It is found in the cytoplasm. It carries out the reaction L-phenylalanine = (E)-cinnamate + NH4(+). The enzyme catalyses L-tyrosine = (E)-4-coumarate + NH4(+). Its pathway is phenylpropanoid metabolism; trans-cinnamate biosynthesis; trans-cinnamate from L-phenylalanine: step 1/1. Functionally, catalyzes the non-oxidative deamination of L-phenylalanine and L-tyrosine to form trans-cinnamic acid and p-coumaric acid respectively with similar efficiencies. Facilitates the commitment step in phenylpropanoid pathways that produce secondary metabolites such as lignins, coumarins and flavonoids. The chain is Phenylalanine/tyrosine ammonia-lyase (PAL) from Rhodotorula toruloides (Yeast).